The chain runs to 65 residues: Small ribosomal subunit protein bS21 (65 aa).

Residues 45 to 65 are disordered; that stretch reads GRLKRSRSRRRAQRANEERNS. Basic residues predominate over residues 48-57; it reads KRSRSRRRAQ.

Belongs to the bacterial ribosomal protein bS21 family.

This chain is Small ribosomal subunit protein bS21, found in Pelodictyon phaeoclathratiforme (strain DSM 5477 / BU-1).